The sequence spans 964 residues: E3 ubiquitin-protein ligase TRIM37 (964 aa).

An N-acetylmethionine modification is found at Met-1. The RING-type; degenerate zinc finger occupies 15–55; the sequence is CFICMEKLRDARLCPHCSKLCCFSCIRRWLTEQRAQCPHCR. A B box-type zinc finger spans residues 90-132; the sequence is NEKDKCENHHEKLSVFCWTCKKCICHQCALWGGMHGGHTFKPL. Positions 95, 98, 117, and 124 each coordinate Zn(2+). Positions 132–234 form a coiled coil; the sequence is LAEIYEQHVT…VEHQLRSCSK (103 aa). The MATH domain maps to 276 to 403; the sequence is YDSATFVLEN…NDTVILRFQV (128 aa). Residues 419–450 are a coiled coil; it reads ITQLEAAQTSYIQQINNLKERLTIELSRTQKS. Ser-454 bears the Phosphoserine mark. Disordered stretches follow at residues 477–513, 530–554, and 640–663; these read CSDM…HHEL, QLDG…IDEE, and RPPA…RKQQ. Over residues 503–513 the composition is skewed to basic and acidic residues; sequence KIQNEDYHHEL. The span at 534 to 544 shows a compositional bias: low complexity; sequence SSSSASSTATS. The stretch at 673–700 forms a coiled coil; it reads KMLKRLKTQMAEVRCMKTDVKNTLSEIK. Residues 752–761 show a composition bias toward polar residues; sequence NSTNKKSNSP. Disordered regions lie at residues 752-812 and 891-964; these read NSTN…SPRA and GASA…NSGR. Residues 776-788 are compositionally biased toward basic and acidic residues; it reads RAVDPGENSRSKG. A compositionally biased stretch (low complexity) spans 794–807; that stretch reads SEGSPGSSQSGSRH. Over residues 904–916 the composition is skewed to acidic residues; that stretch reads SDIECDTENEEQE. Over residues 955 to 964 the composition is skewed to polar residues; that stretch reads SFNTDENSGR.

Belongs to the TRIM/RBCC family. As to quaternary structure, associates with the PRC2/EED-EZH2 complex. Auto-ubiquitinated. Ubiquitous. Highly expressed in testis, while it is weakly expressed in other tissues.

It localises to the chromosome. The protein resides in the cytoplasm. It is found in the perinuclear region. The protein localises to the peroxisome membrane. It catalyses the reaction S-ubiquitinyl-[E2 ubiquitin-conjugating enzyme]-L-cysteine + [acceptor protein]-L-lysine = [E2 ubiquitin-conjugating enzyme]-L-cysteine + N(6)-ubiquitinyl-[acceptor protein]-L-lysine.. The protein operates within protein modification; protein ubiquitination. Its function is as follows. E3 ubiquitin-protein ligase required to prevent centriole reduplication. Probably acts by ubiquitinating positive regulators of centriole reduplication. Mediates monoubiquitination of 'Lys-119' of histone H2A (H2AK119Ub), a specific tag for epigenetic transcriptional repression: associates with some Polycomb group (PcG) multiprotein PRC2-like complex and mediates repression of target genes. Also acts as a positive regulator of peroxisome import by mediating monoubiquitination of PEX5 at 'Lys-472': monoubiquitination promotes PEX5 stabilitation by preventing its polyubiquitination and degradation by the proteasome. Has anti-HIV activity. The protein is E3 ubiquitin-protein ligase TRIM37 of Homo sapiens (Human).